A 557-amino-acid chain; its full sequence is Formate--tetrahydrofolate ligase (557 aa).

An ATP-binding site is contributed by 66 to 73 (TPAGEGKS).

Belongs to the formate--tetrahydrofolate ligase family.

The catalysed reaction is (6S)-5,6,7,8-tetrahydrofolate + formate + ATP = (6R)-10-formyltetrahydrofolate + ADP + phosphate. The protein operates within one-carbon metabolism; tetrahydrofolate interconversion. In Lactobacillus johnsonii (strain CNCM I-12250 / La1 / NCC 533), this protein is Formate--tetrahydrofolate ligase.